Reading from the N-terminus, the 871-residue chain is Probable inorganic carbon transporter subunit DabA (871 aa).

The Zn(2+) site is built by Cys396, Asp398, His577, and Cys592.

This sequence belongs to the inorganic carbon transporter (TC 9.A.2) DabA family. In terms of assembly, forms a complex with DabB. The cofactor is Zn(2+).

The protein localises to the cell membrane. In terms of biological role, part of an energy-coupled inorganic carbon pump. The polypeptide is Probable inorganic carbon transporter subunit DabA (Bacillus subtilis (strain 168)).